Consider the following 531-residue polypeptide: Retinoid isomerohydrolase (531 aa).

A lipid anchor (S-palmitoyl cysteine; in membrane form) is attached at Cys-112. 3 residues coordinate Fe cation: His-180, His-241, and His-313. Cys-329 is lipidated: S-palmitoyl cysteine; in membrane form. Fe cation is bound at residue His-526.

Belongs to the carotenoid oxygenase family. Requires Fe(2+) as cofactor. In terms of processing, palmitoylated. As to expression, retinal pigment epithelium-specific.

The protein resides in the cytoplasm. It localises to the cell membrane. The catalysed reaction is an all-trans-retinyl ester + H2O = 11-cis-retinol + a fatty acid + H(+). It carries out the reaction lutein = (3R,3'S)-zeaxanthin. The enzyme catalyses all-trans-retinyl hexadecanoate + H2O = 11-cis-retinol + hexadecanoate + H(+). Plays important roles in the production of 11-cis retinal and in visual pigment regeneration. Capable of catalyzing the isomerization of lutein to meso-zeaxanthin an eye-specific carotenoid. The protein is Retinoid isomerohydrolase (rpe65a) of Danio rerio (Zebrafish).